We begin with the raw amino-acid sequence, 90 residues long: Kunitz-type serine protease inhibitor B5 (90 aa).

The first 24 residues, 1–24 (MSSGGLLLLLGLLTLWAELTPISG), serve as a signal peptide directing secretion. The region spanning 31–81 (CYLPADPGECLAHMRSFYYDSESKKCKEFIYGGCHGNANKFPSRDKCRQTC) is the BPTI/Kunitz inhibitor domain. Intrachain disulfides connect Cys31–Cys81, Cys40–Cys64, and Cys56–Cys77. Residues 85-90 (AKGRPT) constitute a propeptide that is removed on maturation.

This sequence belongs to the venom Kunitz-type family. In terms of tissue distribution, expressed by the venom gland.

It is found in the secreted. Serine protease inhibitor. In Daboia siamensis (Eastern Russel's viper), this protein is Kunitz-type serine protease inhibitor B5.